A 144-amino-acid polypeptide reads, in one-letter code: L-fucose mutarotase (144 aa).

The active-site Proton donor is the His-22. Residues Asp-30, Arg-109, and Tyr-131–Asn-133 each bind substrate.

It belongs to the RbsD / FucU family. FucU mutarotase subfamily. As to quaternary structure, homodecamer.

The protein localises to the cytoplasm. The catalysed reaction is alpha-L-fucose = beta-L-fucose. The protein operates within carbohydrate metabolism; L-fucose metabolism. Its function is as follows. Involved in the anomeric conversion of L-fucose. This is L-fucose mutarotase from Actinobacillus pleuropneumoniae serotype 5b (strain L20).